Consider the following 386-residue polypeptide: MFEPMELTNDAVIKVIGVGGGGGNAVEHMVRERIEGVDFFAVNTDAQALRKTAVGQTIQIGSGITKGLGAGANPEVGRHSAEEDREALRAALEGADMVFIAAGMGGGTGTGAAPVVAEVAKDQGILTVAVVAKPFNFEGKKRMAFAEQGIAELSKHVDSLITIPNDKLLKVLGRGISLLDAFGAANDVLKGAVQGIAELITRPGLMNVDFADVRTVMSEMGYAMMGSGVACGEDRAEEAAEMAISSPLLEDIDLSGARGVLVNITAGFDLRLDEFETVGNTIRAFASDNATVVIGTSLDPDMNDELRVTVVATGIGMDKRPEITLVTNKQSSQRVMDNLYRDHAAGMSSLNQEQKTAAKAVNEQNAQGSKEPDYLDIPAFLRKQAD.

Residues 20 to 24 (GGGGN), 107 to 109 (GTG), E138, R142, and N186 contribute to the GTP site. The segment at 350-377 (LNQEQKTAAKAVNEQNAQGSKEPDYLDI) is disordered.

It belongs to the FtsZ family. As to quaternary structure, homodimer. Polymerizes to form a dynamic ring structure in a strictly GTP-dependent manner. Interacts directly with several other division proteins.

Its subcellular location is the cytoplasm. In terms of biological role, essential cell division protein that forms a contractile ring structure (Z ring) at the future cell division site. The regulation of the ring assembly controls the timing and the location of cell division. One of the functions of the FtsZ ring is to recruit other cell division proteins to the septum to produce a new cell wall between the dividing cells. Binds GTP and shows GTPase activity. The polypeptide is Cell division protein FtsZ (Sodalis glossinidius).